We begin with the raw amino-acid sequence, 358 residues long: C-X-C chemokine receptor type 4 (358 aa).

An important for chemokine binding and signaling region spans residues 1–25 (MDGFSGGIDINIFDSNSTENGSGDF). Topologically, residues 1–44 (MDGFSGGIDINIFDSNSTENGSGDFEDFSEPCFMHDNSDFNRIF) are extracellular. 2 N-linked (GlcNAc...) asparagine glycosylation sites follow: N16 and N20. Intrachain disulfides connect C32/C281 and C113/C190. A helical transmembrane segment spans residues 45–67 (LPTIYSFIFLLGIIGNGLVVVVM). Over 68–81 (GYQKKSRTMTDKYR) the chain is Cytoplasmic. A helical membrane pass occupies residues 82–103 (LHLSVADLLFVFTLPFWSVDAA). Residues 98 to 101 (WSVD) form a chemokine binding region. Residues 104–114 (IGWYFKEFLCK) lie on the Extracellular side of the membrane. The helical transmembrane segment at 115–134 (AVHVIYTVNLYSSVLILAFI) threads the bilayer. Residues 117-121 (HVIYT) are chemokine binding. The Cytoplasmic portion of the chain corresponds to 135–158 (SLDRYLAIVHATNSQGSRKMLADK). The interval 139 to 151 (YLAIVHATNSQGS) is involved in dimerization; when bound to chemokine. Residues 159–178 (VVYAGVWLPALLLTVPDLVF) traverse the membrane as a helical segment. Topologically, residues 179 to 202 (ARVSDENGQFVCDRIYPIDNRETW) are extracellular. Residues 190-194 (CDRIY) are chemokine binding, important for signaling. A helical transmembrane segment spans residues 203–223 (TVGFRFLHITVGLILPGLIIL). Topologically, residues 224–248 (ICYCVIISKLSHSKGHQKRKALKTT) are cytoplasmic. The chain crosses the membrane as a helical span at residues 249–268 (VILILAFFACWLPYYVCLTT). At 269–289 (DTFMLLGLLKADCIWENTLHK) the chain is on the extracellular side. A helical transmembrane segment spans residues 290–309 (AISITEALAFFHCCLNPILY). At 310–358 (AFLGAKFKTSAQNAFTSVSRGSSLKILSKKRAGLSSVSTESESSSFHSS) the chain is on the cytoplasmic side. The interval 338–358 (KKRAGLSSVSTESESSSFHSS) is disordered. The span at 344–358 (SSVSTESESSSFHSS) shows a compositional bias: low complexity.

This sequence belongs to the G-protein coupled receptor 1 family. Monomer. Can form dimers. Post-translationally, sulfation is required for efficient binding of cxcl12/sdf-1alpha and promotes its dimerization. O- and N-glycosylated.

The protein localises to the cell membrane. The protein resides in the cytoplasm. It localises to the nucleus. It is found in the early endosome. Its subcellular location is the late endosome. The protein localises to the lysosome. Receptor for the C-X-C chemokine cxcl12/sdf-1. Transduces a signal by increasing the intracellular calcium ion level. Signaling with cxcl12/sdf-1 mediates the directional movement of mesodermal cells during gastrulation. May play a role in the migration of embryonic presumptive primordial germ cells (pPGCs). May also be involved in regulating migration of hematopoietic stem cells into the larval liver. The sequence is that of C-X-C chemokine receptor type 4 from Xenopus tropicalis (Western clawed frog).